A 193-amino-acid polypeptide reads, in one-letter code: Xanthine phosphoribosyltransferase (193 aa).

L20 and T27 together coordinate xanthine. Position 128–132 (128–132 (ANGQA)) interacts with 5-phospho-alpha-D-ribose 1-diphosphate. K156 contacts xanthine.

This sequence belongs to the purine/pyrimidine phosphoribosyltransferase family. Xpt subfamily. In terms of assembly, homodimer.

It is found in the cytoplasm. The enzyme catalyses XMP + diphosphate = xanthine + 5-phospho-alpha-D-ribose 1-diphosphate. Its pathway is purine metabolism; XMP biosynthesis via salvage pathway; XMP from xanthine: step 1/1. Functionally, converts the preformed base xanthine, a product of nucleic acid breakdown, to xanthosine 5'-monophosphate (XMP), so it can be reused for RNA or DNA synthesis. The protein is Xanthine phosphoribosyltransferase of Streptococcus pneumoniae serotype 4 (strain ATCC BAA-334 / TIGR4).